Here is a 555-residue protein sequence, read N- to C-terminus: Perforin-1 (555 aa).

The first 21 residues, 1 to 21 (MAARLLLLGILLLLLPLPVPA), serve as a signal peptide directing secretion. 3 cysteine pairs are disulfide-bonded: C23/C76, C31/C73, and C102/C176. Residues 27-375 (ARSECKRSHK…QYLTDRARWR (349 aa)) enclose the MACPF domain. Residues 129-149 (WKVGLDVTPKPTSNVHVSVAG) traverse the membrane as a beta stranded segment. The N-linked (GlcNAc...) asparagine glycan is linked to N205. 4 cysteine pairs are disulfide-bonded: C242–C408, C377–C393, C381–C395, and C397–C407. A beta stranded transmembrane segment spans residues 257 to 279 (CLTVEAQVNIGIHGSISAEAKAC). Positions 376-408 (DCSRPCPPGRQKSPRDPCQCVCHGSAVTTQDCC) constitute an EGF-like domain. The C2 domain maps to 397 to 519 (CHGSAVTTQD…CNLNHGHLKF (123 aa)). 10 residues coordinate Ca(2+): G429, D430, T433, A434, D436, D484, D486, D490, D491, and D492. Intrachain disulfides connect C497–C510 and C525–C534. An N-linked (GlcNAc...) asparagine glycan is attached at N549.

This sequence belongs to the complement C6/C7/C8/C9 family. In terms of assembly, monomer, as soluble protein. Homooligomer; homooligomerizes to form a pore-forming ring. It depends on Ca(2+) as a cofactor. Post-translationally, N-glycosylated.

It is found in the cytolytic granule. Its subcellular location is the secreted. The protein localises to the cell membrane. The protein resides in the endosome lumen. Its function is as follows. Pore-forming protein that plays a key role in granzyme-mediated programmed cell death, and in defense against virus-infected or neoplastic cells. Plays an important role in killing other cells that are recognized as non-self by the immune system, e.g. in transplant rejection or some forms of autoimmune disease. Can insert into the membrane of target cells in its calcium-bound form, oligomerize and form large pores. Promotes cytolysis and apoptosis of target cells by mediating the passage and uptake of cytotoxic granzymes. Facilitates the delivery of cationic cargo protein, while anionic or neural proteins are not delivered efficiently. Perforin pores allow the release of mature caspase-7 (CASP7) into the extracellular milieu. This Homo sapiens (Human) protein is Perforin-1 (PRF1).